A 234-amino-acid chain; its full sequence is Ammonia monooxygenase gamma subunit (234 aa).

Residues 1–20 (MRMIKFLLLAILLAPFVAHS) form the signal peptide. Positions 38–193 (ESLQRGAKGF…RFVADLVNYM (156 aa)) constitute a Cytochrome c domain. 3 residues coordinate heme c: Cys-51, Cys-54, and His-55. Residues 206–226 (ELGITVLLFLFGMLGLTYLLK) traverse the membrane as a helical segment.

This sequence belongs to the cytochrome c family. In terms of assembly, the soluble ammonia monooxygenase is a nonamer composed of three alpha subunits (AmoA), three beta subunits (AmoB) and three gamma subunits (Cytochrome c1 PetC). The cofactor is heme c.

The protein resides in the cell membrane. It is found in the cytoplasm. Functionally, part of the ammonia monooxygenase complex, which catalyzes the oxidation of ammonia to hydroxylamine, the first reaction in the process of ammonia oxidation to nitrite. This Nitrosomonas europaea (strain ATCC 19718 / CIP 103999 / KCTC 2705 / NBRC 14298) protein is Ammonia monooxygenase gamma subunit.